A 78-amino-acid chain; its full sequence is MAFRENVLEILEEITETDEVVQNTNIKLFDEGLLDSMATVQLLIEIEEKLDITVPVSEFDRDEWATPEMIITQLEALK.

Residues Met-1–Lys-78 form the Carrier domain. Ser-36 is modified (O-(pantetheine 4'-phosphoryl)serine).

This sequence belongs to the DltC family. Post-translationally, 4'-phosphopantetheine is transferred from CoA to a specific serine of apo-DCP.

Its subcellular location is the cytoplasm. It participates in cell wall biogenesis; lipoteichoic acid biosynthesis. Functionally, carrier protein involved in the D-alanylation of lipoteichoic acid (LTA). The loading of thioester-linked D-alanine onto DltC is catalyzed by D-alanine--D-alanyl carrier protein ligase DltA. The DltC-carried D-alanyl group is further transferred to cell membrane phosphatidylglycerol (PG) by forming an ester bond, probably catalyzed by DltD. D-alanylation of LTA plays an important role in modulating the properties of the cell wall in Gram-positive bacteria, influencing the net charge of the cell wall. The protein is D-alanyl carrier protein of Listeria monocytogenes serotype 4b (strain CLIP80459).